We begin with the raw amino-acid sequence, 305 residues long: Sulfate adenylyltransferase subunit 2 (305 aa).

It belongs to the PAPS reductase family. CysD subfamily. Heterodimer composed of CysD, the smaller subunit, and CysN.

The enzyme catalyses sulfate + ATP + H(+) = adenosine 5'-phosphosulfate + diphosphate. It participates in sulfur metabolism; hydrogen sulfide biosynthesis; sulfite from sulfate: step 1/3. In terms of biological role, with CysN forms the ATP sulfurylase (ATPS) that catalyzes the adenylation of sulfate producing adenosine 5'-phosphosulfate (APS) and diphosphate, the first enzymatic step in sulfur assimilation pathway. APS synthesis involves the formation of a high-energy phosphoric-sulfuric acid anhydride bond driven by GTP hydrolysis by CysN coupled to ATP hydrolysis by CysD. The chain is Sulfate adenylyltransferase subunit 2 from Pseudomonas fluorescens (strain SBW25).